Consider the following 411-residue polypeptide: MFLSLFCVIIVAVGCSSKDGNVKLEFVQAMWRHGERSALADLYPIYEKDWVFGGGGLGELTGRGMGEMNNLGRLIRERYVRKFNFLEPKYASKEVYFRSTNLNRTIISAMSLLYGLFPPSLYDIPNVDYPFTPLKWLPGLAFVPVHVDGSDQCAASQNCPCPRYDFLQQQMLTLPEVQQAFQQVILLNRQIAPLYNVTTGVDTFYVYPDTWKCQRAYFNKTMYDKLPWYNEQLYSKAEITYAPIKGFLEGSFSQPAVTSNGLDVAFEIQQVRSGVMINEIVSRASEKLNCVERGQNCTSYLNKLKFYGYSIHDNNVYAVLVALGIPHISATEDGWPSYAAAIFFEFYRNSQTNKRLFKVLYRQDASSQITDVTSQVPMCQGVSMCPLSTFQHLADVLKPIPDINTVCNITS.

H33 functions as the Nucleophile in the catalytic mechanism. D313 acts as the Proton donor in catalysis. Cysteines 379 and 385 form a disulfide.

This sequence belongs to the histidine acid phosphatase family.

It catalyses the reaction a phosphate monoester + H2O = an alcohol + phosphate. The sequence is that of Putative acid phosphatase 10 (pho-10) from Caenorhabditis elegans.